The sequence spans 309 residues: Taste receptor type 2 member 8 (309 aa).

Residues 1 to 7 lie on the Extracellular side of the membrane; it reads MFSPADN. The helical transmembrane segment at 8–28 threads the bilayer; that stretch reads IFIILITGEFILGILGNGYIA. Residues 29–50 are Cytoplasmic-facing; the sequence is LVNWIDWIKKKKISTVDYILTN. A helical membrane pass occupies residues 51 to 71; sequence LVIARICLISVMVVNGIVIVL. Over 72–82 the chain is Extracellular; sequence NPDVYTKNKQQ. The chain crosses the membrane as a helical span at residues 83–103; it reads IVIFTFWTFANYLNMWITTCL. Residues 104–131 lie on the Cytoplasmic side of the membrane; the sequence is NVFYFLKIASSSHPLFLWLKWKIDMVVH. A helical membrane pass occupies residues 132–152; the sequence is WILLGCFAISLLVSLIAAIVL. Topologically, residues 153-184 are extracellular; it reads SCDYRFHAIAKHKRNITEMFXVSKIPYFEPLT. N-linked (GlcNAc...) asparagine glycosylation is present at Asn167. Residues 185–205 traverse the membrane as a helical segment; that stretch reads LFNLFAIVPFIVSLISFFLLV. At 206–239 the chain is on the cytoplasmic side; that stretch reads RSLWRHTKQIKLYATGSRDPSTEVHVRAIKTMTS. A helical transmembrane segment spans residues 240–260; that stretch reads FIFFFFLYFISSILMTFSYLM. Residues 261 to 266 lie on the Extracellular side of the membrane; sequence TKYKLA. Residues 267-287 traverse the membrane as a helical segment; that stretch reads VEFGEIAAILYPLGHSLILIV. At 288-309 the chain is on the cytoplasmic side; it reads LNNKLRQIFVRMLTCRKIACVI.

This sequence belongs to the G-protein coupled receptor T2R family.

It localises to the membrane. In terms of biological role, receptor that may play a role in the perception of bitterness and is gustducin-linked. May play a role in sensing the chemical composition of the gastrointestinal content. The activity of this receptor may stimulate alpha gustducin, mediate PLC-beta-2 activation and lead to the gating of TRPM5. The protein is Taste receptor type 2 member 8 (TAS2R8) of Pan troglodytes (Chimpanzee).